Reading from the N-terminus, the 59-residue chain is Cortexin domain containing 2 (59 aa).

The helical transmembrane segment at 20–40 threads the bilayer; that stretch reads FAIAFVVLVFVFLIVMVFRCV.

The protein resides in the membrane. This chain is Cortexin domain containing 2, found in Mus musculus (Mouse).